Here is a 1658-residue protein sequence, read N- to C-terminus: Collagen alpha-1(XXVII) chain B (1658 aa).

The signal sequence occupies residues 1-38 (MEPDNTPSSRLRAAGVGGRAVFFCMVLYCTCCLRLAQA). The region spanning 66–229 (GVILTTRARI…NYCKYIKKQC (164 aa)) is the Laminin G-like domain. The segment covering 308-323 (SIRNRTSQISPKPTQQ) has biased composition (polar residues). 6 disordered regions span residues 308 to 332 (SIRNRTSQISPKPTQQNRKKAKKER), 345 to 364 (VTDSPTSQQQNQVDIPTTTT), 427 to 550 (GLKG…GNMG), 571 to 614 (GERG…APGP), 637 to 1332 (GPKG…DAGE), and 1377 to 1415 (IIGPSGNPGPQGDKGNKGEMGVQGPRGPPGPRGPPGPPG). A triple-helical region region spans residues 424–1417 (ELTGLKGEPG…RGPPGPPGLP (994 aa)). 7 Collagen-like domains span residues 425–478 (LTGL…GNPG), 493–552 (GLVG…MGPK), 556–615 (GFIG…PGPV), 622–681 (GDMG…PGLP), 685–744 (GKPG…PGLE), 748–807 (GPVG…MGLA), and 811–870 (GDRG…RGPD). Residues 434-444 (LPGPPGPPGQP) are compositionally biased toward pro residues. Low complexity predominate over residues 491 to 506 (DPGLVGLPGQPGQPGR). Low complexity-rich tracts occupy residues 657 to 666 (LGLPGEPGEP) and 678 to 692 (PGLPGVQGKPGPQGK). A compositionally biased stretch (gly residues) spans 733–742 (GIPGPGGLPG). 2 stretches are compositionally biased toward low complexity: residues 837–852 (RGLSGPAGAPGPHGSR) and 875–890 (EKGMMGMKGPEGPPGK). Collagen-like domains are found at residues 892–951 (GLSG…IGLP), 952–1011 (GKAG…VGLE), 1024–1083 (GTEG…IGPK), 1084–1137 (GSRG…DGKV), 1139–1198 (GPPG…KGSK), 1199–1258 (GNKG…PGDL), 1268–1327 (GKPG…KGQP), and 1361–1420 (GPQG…PAVA). The span at 1040-1058 (PEGKPGKIGERGKPGEKGS) shows a compositional bias: basic and acidic residues. A compositionally biased stretch (low complexity) spans 1112 to 1124 (HQGPQGSLGSPGP). A compositionally biased stretch (basic and acidic residues) spans 1125–1137 (KGEKGEQGDDGKV). The span at 1215–1230 (NRGSPGPVGVPGPRGV) shows a compositional bias: low complexity. The span at 1307–1316 (GLNGGMGFPG) shows a compositional bias: gly residues. A compositionally biased stretch (pro residues) spans 1402–1415 (RGPPGPRGPPGPPG). The propeptide at 1421–1658 (FSHENEALGA…HLEVGPVCFL (238 aa)) is C-terminal propeptide. A Fibrillar collagen NC1 domain is found at 1458-1658 (SEIFKTLHYL…HLEVGPVCFL (201 aa)). Disulfide bonds link Cys-1488/Cys-1520, Cys-1529/Cys-1656, and Cys-1565/Cys-1609. Residues Asp-1506, Asn-1508, Cys-1511, and Asp-1514 each coordinate Ca(2+). N-linked (GlcNAc...) asparagine glycosylation is present at Asn-1567.

Belongs to the fibrillar collagen family. In terms of tissue distribution, weakly expressed in the notochord from the 6 somite stage. Expressed throughout the notochord at 13 somites, then becomes restricted to the distal tip of the notochord by 24 hpf. Also expressed in head cartilages by 48 hpf.

It is found in the secreted. Its subcellular location is the extracellular space. It localises to the extracellular matrix. May play a role during the calcification of cartilage and the transition of cartilage to bone. Together with col27a1a, plays a role in development of the notochord and axial skeleton. This Danio rerio (Zebrafish) protein is Collagen alpha-1(XXVII) chain B (col27a1b).